Here is a 135-residue protein sequence, read N- to C-terminus: MTLRNKAFHQLRQLFQQHTARWQHELPDLTKPQYAVMRAIADKPGIEQVALIEAAVSTKATLAEMLARMENRGLVRREHDAADKRRRFVWLTAEGEKILAAAIPIGDSVDEEFLGRLSAEEQELFVQLVRKMMNT.

One can recognise an HTH marR-type domain in the interval 4–134 (RNKAFHQLRQ…FVQLVRKMMN (131 aa)). Positions 48–71 (QVALIEAAVSTKATLAEMLARMEN) form a DNA-binding region, H-T-H motif.

Functionally, involved in the temperature-dependent positive control of flagellum-driven swimming motility and cellular aggregation. Regulates fliC expression by directly interacting with fliC promoter. The polypeptide is Transcriptional regulator HosA (hosA) (Escherichia coli O157:H7).